Here is a 225-residue protein sequence, read N- to C-terminus: Cytidylate kinase (225 aa).

11–19 (GPAAAGKST) provides a ligand contact to ATP.

It belongs to the cytidylate kinase family. Type 1 subfamily.

It is found in the cytoplasm. The catalysed reaction is CMP + ATP = CDP + ADP. The enzyme catalyses dCMP + ATP = dCDP + ADP. The polypeptide is Cytidylate kinase (Bacillus cereus (strain B4264)).